Reading from the N-terminus, the 261-residue chain is Zinc finger protein 664 (261 aa).

9 consecutive C2H2-type zinc fingers follow at residues 3 to 25 (YKCP…QKIH), 31 to 53 (HKCD…WRDH), 59 to 81 (YKCD…KKIH), 87 to 109 (YKCY…MRVH), 115 to 137 (YVCS…QRVH), 143 to 165 (FKCE…QRVH), 171 to 193 (YKCY…QRVH), 199 to 221 (YRCC…QRVH), and 227 to 249 (FKCD…QRVH). Lys257 participates in a covalent cross-link: Glycyl lysine isopeptide (Lys-Gly) (interchain with G-Cter in SUMO2).

Belongs to the krueppel C2H2-type zinc-finger protein family.

Its subcellular location is the nucleus. In terms of biological role, may be involved in transcriptional regulation. This is Zinc finger protein 664 (Znf664) from Mus musculus (Mouse).